The following is a 681-amino-acid chain: Methionine--tRNA ligase (681 aa).

The 'HIGH' region signature appears at 18 to 28; that stretch reads PYANGSIHLGH. 4 residues coordinate Zn(2+): Cys149, Cys152, Cys162, and Cys165. Residues 334 to 338 carry the 'KMSKS' region motif; the sequence is KMSKS. Residue Lys337 participates in ATP binding. Positions 580-681 constitute a tRNA-binding domain; the sequence is DFAKLDLRIV…NGAEPGQRVS (102 aa).

The protein belongs to the class-I aminoacyl-tRNA synthetase family. MetG type 1 subfamily. As to quaternary structure, homodimer. Zn(2+) serves as cofactor.

It is found in the cytoplasm. The catalysed reaction is tRNA(Met) + L-methionine + ATP = L-methionyl-tRNA(Met) + AMP + diphosphate. Functionally, is required not only for elongation of protein synthesis but also for the initiation of all mRNA translation through initiator tRNA(fMet) aminoacylation. This chain is Methionine--tRNA ligase, found in Chromohalobacter salexigens (strain ATCC BAA-138 / DSM 3043 / CIP 106854 / NCIMB 13768 / 1H11).